A 447-amino-acid chain; its full sequence is MTQRKYFGTDGVRGEVGGEVINAAFALRLGYAAGRVLARQHGGRGGSRPQVVIGKDTRISGYMLESALEAGLSAAGIDVLLAGPVPTPAVAYLTRALRLVAGIVISASHNPYQDNGIKFFSAQGMKLPDEVEAEIEAALHEPLGCVGSEALGRARRMQDSQGRYIEFCKSTFPNDLDLNGVKIVVDAAHGAAYNVAPHVFRELGADVHAIGVSPDGFNINEGVGALHPESLARAVRERGAHLGIALDGDADRLQMVDGDGRIYNGDELLYAIVRERMSRGTVAGVVGTLMTNYGFELEMQRLGVGFERAKVGDRYVMEQMQARGWLYGGESSGHLICLDCHTTGDGIIAALQVLTALRRGNVPLADWLGDLRMYPQKMINVPLAPGTDWKSHAGLAAATRAVEAELAGRGRVLIRASGTEPKLRLMVEAEEPALAASCAEKLAASLA.

The active-site Phosphoserine intermediate is S108. The Mg(2+) site is built by S108, D247, D249, and D251. S108 carries the phosphoserine modification.

Belongs to the phosphohexose mutase family. Mg(2+) is required as a cofactor. Activated by phosphorylation.

The catalysed reaction is alpha-D-glucosamine 1-phosphate = D-glucosamine 6-phosphate. Catalyzes the conversion of glucosamine-6-phosphate to glucosamine-1-phosphate. The sequence is that of Phosphoglucosamine mutase from Bordetella petrii (strain ATCC BAA-461 / DSM 12804 / CCUG 43448).